Reading from the N-terminus, the 659-residue chain is Crossover junction endonuclease MUS81 (659 aa).

The Helix-hairpin-helix motif 1 signature appears at 59–78 (KDLSQIKGFGKWMVKLMKGY). In terms of domain architecture, ERCC4 spans 404–503 (ILILDDREKF…KKLIYILEGD (100 aa)). Residues 585–622 (TISDVFAIQLMQVPQVTEEIAIAVLDMYPTLLSLASAY) carry the Helix-hairpin-helix motif 2 motif.

It belongs to the XPF family. Forms a heterodimer with EME1A or EME1B. Mg(2+) serves as cofactor. The cofactor is Ca(2+). In terms of tissue distribution, ubiquitous but preferentially expressed in young flowers buds, notably in anthers.

It localises to the nucleus. The protein localises to the nucleolus. Its function is as follows. Interacts with EME1 to form a DNA structure-specific endonuclease with substrate preference for branched DNA structures with a 5'-end at the branch nick. Typical substrates include 3'-flap structures, D-loops, replication forks, nicked Holliday junctions and also intact Holliday junctions with a reduced efficiency. May be required in mitosis for the processing of stalled or collapsed replication fork intermediates. Plays a role in DNA repair and in genotoxic stress-induced homologous recombination (HR) in somatic cells. Mediates a subset of meiotic recombination events that are insensitive to crossover interference. Together with SEND1, essential for the resolution of toxic replication structures to ensure genome stability, and to maintain telomere integrity and replication. In Arabidopsis thaliana (Mouse-ear cress), this protein is Crossover junction endonuclease MUS81.